The sequence spans 475 residues: Fez family zinc finger protein 1 (475 aa).

Residues 28–43 (PLAFSIERIMARTPEP) carry the Engrailed homology 1 repressor motif. C2H2-type zinc fingers lie at residues 260-282 (FTCEVCGKVFNAHYNLTRHMPVH), 288-310 (FVCKVCGKGFRQASTLCRHKIIH), 316-338 (HKCNQCGKAFNRSSTLNTHTRIH), 344-366 (FVCEFCGKGFHQKGNYKNHKLTH), 372-394 (FKCNICNKAFHQVYNLTFHMHTH), and 400-423 (FTCPTCGKGFCRNFDLKKHVRKLH). Positions 428-475 (GLARTPAGEPGTEPPPPLPQQPPMTLPPLQPPLPTPGPLQPGLHQGHQ) are disordered. A compositionally biased stretch (pro residues) spans 439–466 (TEPPPPLPQQPPMTLPPLQPPLPTPGPL).

It belongs to the krueppel C2H2-type zinc-finger protein family. As to expression, expressed in brain. Little or no expression in other tissues. Overexpressed specifically in gastric cancers. A 2- to 20-fold increase is found in over 50% of gastric cancer tissues.

The protein resides in the nucleus. Transcription repressor. Involved in the axonal projection and proper termination of olfactory sensory neurons (OSN). Plays a role in rostro-caudal patterning of the diencephalon and in prethalamic formation. Expression is required in OSN to cell-autonomously regulate OSN axon projections. Regulates non-cell-autonomously the layer formation of the olfactory bulb development and the interneurons. May be required for correct rostral migration of the interneuron progenitors. This chain is Fez family zinc finger protein 1 (FEZF1), found in Homo sapiens (Human).